A 307-amino-acid polypeptide reads, in one-letter code: Elongation factor Ts (307 aa).

The segment at 79-82 (TDFV) is involved in Mg(2+) ion dislocation from EF-Tu.

Belongs to the EF-Ts family.

It is found in the cytoplasm. Its function is as follows. Associates with the EF-Tu.GDP complex and induces the exchange of GDP to GTP. It remains bound to the aminoacyl-tRNA.EF-Tu.GTP complex up to the GTP hydrolysis stage on the ribosome. This chain is Elongation factor Ts, found in Bartonella henselae (strain ATCC 49882 / DSM 28221 / CCUG 30454 / Houston 1) (Rochalimaea henselae).